A 381-amino-acid polypeptide reads, in one-letter code: Cytochrome b (381 aa).

4 consecutive transmembrane segments (helical) span residues 34–54, 78–99, 114–134, and 179–199; these read FGSL…FLAM, WLIR…YLHI, WNIG…GYVL, and FFAF…IHLL. Heme b-binding residues include His-84 and His-98. Heme b-binding residues include His-183 and His-197. His-202 contacts a ubiquinone. 4 helical membrane passes run 227 to 247, 289 to 309, 321 to 341, and 348 to 368; these read YKDL…ALFM, LGGV…PLLH, MTQI…WIGG, and FMMV…IIMP.

Belongs to the cytochrome b family. The cytochrome bc1 complex contains 3 respiratory subunits (MT-CYB, CYC1 and UQCRFS1), 2 core proteins (UQCRC1 and UQCRC2) and probably 6 low-molecular weight proteins. Heme b serves as cofactor.

It is found in the mitochondrion inner membrane. Component of the ubiquinol-cytochrome c reductase complex (complex III or cytochrome b-c1 complex) that is part of the mitochondrial respiratory chain. The b-c1 complex mediates electron transfer from ubiquinol to cytochrome c. Contributes to the generation of a proton gradient across the mitochondrial membrane that is then used for ATP synthesis. The sequence is that of Cytochrome b (mt-cyb) from Prionace glauca (Blue shark).